The chain runs to 370 residues: Aminomethyltransferase (370 aa).

This sequence belongs to the GcvT family. As to quaternary structure, the glycine cleavage system is composed of four proteins: P, T, L and H.

The catalysed reaction is N(6)-[(R)-S(8)-aminomethyldihydrolipoyl]-L-lysyl-[protein] + (6S)-5,6,7,8-tetrahydrofolate = N(6)-[(R)-dihydrolipoyl]-L-lysyl-[protein] + (6R)-5,10-methylene-5,6,7,8-tetrahydrofolate + NH4(+). Its function is as follows. The glycine cleavage system catalyzes the degradation of glycine. The sequence is that of Aminomethyltransferase from Corynebacterium aurimucosum (strain ATCC 700975 / DSM 44827 / CIP 107346 / CN-1) (Corynebacterium nigricans).